We begin with the raw amino-acid sequence, 330 residues long: ADP-L-glycero-D-manno-heptose-6-epimerase (330 aa).

Residues 11–12 (FI), 32–33 (DN), K39, K54, 75–79 (EGACS), and N92 each bind NADP(+). The active-site Proton acceptor is Y139. Position 143 (K143) interacts with NADP(+). Substrate is bound at residue N168. V169 and K177 together coordinate NADP(+). K177 (proton acceptor) is an active-site residue. Substrate is bound by residues R179, H186, 200 to 203 (FGEY), R213, and Y292.

It belongs to the NAD(P)-dependent epimerase/dehydratase family. HldD subfamily. In terms of assembly, homopentamer. NADP(+) serves as cofactor.

It catalyses the reaction ADP-D-glycero-beta-D-manno-heptose = ADP-L-glycero-beta-D-manno-heptose. It functions in the pathway nucleotide-sugar biosynthesis; ADP-L-glycero-beta-D-manno-heptose biosynthesis; ADP-L-glycero-beta-D-manno-heptose from D-glycero-beta-D-manno-heptose 7-phosphate: step 4/4. In terms of biological role, catalyzes the interconversion between ADP-D-glycero-beta-D-manno-heptose and ADP-L-glycero-beta-D-manno-heptose via an epimerization at carbon 6 of the heptose. This Burkholderia ambifaria (strain ATCC BAA-244 / DSM 16087 / CCUG 44356 / LMG 19182 / AMMD) (Burkholderia cepacia (strain AMMD)) protein is ADP-L-glycero-D-manno-heptose-6-epimerase.